The sequence spans 704 residues: MPRKTPIERYRNIGISAHIDAGKTTTTERILFYTGVSHKIGEVHDGAATMDWMEQEQERGITITSAATTAFWKGMAGNYPEHRINIIDTPGHVDFTIEVERSMRVLDGACMVYDSVGGVQPQSETVWRQANKYKVPRIAFVNKMDRVGADFFRVQRQIGERLKGVAVPIQIPVGAEEHFQGVVDLVKMKAIVWDDESQGVKFTYEDIPANLVELAHEWREKMVEAAAEASEELLEKYLTDHNSLTEDEIKAALRKRTIANEIVPMLCGSAFKNKGVQAMLDAVIDYLPSPADVPAILGHDLDDKEAERHPSDDEPFSALAFKIMTDPFVGQLIFFRVYSGVVESGDTLLNATKDKKERLGRILQMHANERKEIKEVRAGDIAAAVGLKEATTGDTLCDPGKPIILEKMEFPEPVISQAVEPKTKADQEKMGLALNRLAQEDPSFRVQTDEESGQTIISGMGELHLEIIVDRMKREFGVEATVGKPQVAYRETVRTVAEDVEGKFVKQSGGRGQYGHAVIKLEPNPGKGYEFLDEIKGGVIPREFIPAVNKGIEETLKSGVLAGYPVVDVKVHLTFGSYHDVDSNENAFRMAGSMAFKEAMRRAKPVLLEPMMAVEVETPEDFMGNVMGDLSSRRGIVQGMEDIAGGGGKLVRAEVPLAEMFGYSTSLRSATQGRATYTMEFKHYAETPSNVSEAVINAKQVGRG.

The tr-type G domain occupies 8–291 (ERYRNIGISA…AVIDYLPSPA (284 aa)). GTP-binding positions include 17 to 24 (AHIDAGKT), 88 to 92 (DTPGH), and 142 to 145 (NKMD).

The protein belongs to the TRAFAC class translation factor GTPase superfamily. Classic translation factor GTPase family. EF-G/EF-2 subfamily.

Its subcellular location is the cytoplasm. In terms of biological role, catalyzes the GTP-dependent ribosomal translocation step during translation elongation. During this step, the ribosome changes from the pre-translocational (PRE) to the post-translocational (POST) state as the newly formed A-site-bound peptidyl-tRNA and P-site-bound deacylated tRNA move to the P and E sites, respectively. Catalyzes the coordinated movement of the two tRNA molecules, the mRNA and conformational changes in the ribosome. This is Elongation factor G 1 from Burkholderia mallei (strain ATCC 23344).